We begin with the raw amino-acid sequence, 412 residues long: CCA-adding enzyme (412 aa).

2 residues coordinate ATP: G8 and R11. The CTP site is built by G8 and R11. D21 and D23 together coordinate Mg(2+). ATP contacts are provided by R91, R137, and R140. CTP-binding residues include R91, R137, and R140.

Belongs to the tRNA nucleotidyltransferase/poly(A) polymerase family. Bacterial CCA-adding enzyme type 2 subfamily. Mg(2+) serves as cofactor.

It catalyses the reaction a tRNA precursor + 2 CTP + ATP = a tRNA with a 3' CCA end + 3 diphosphate. The catalysed reaction is a tRNA with a 3' CCA end + 2 CTP + ATP = a tRNA with a 3' CCACCA end + 3 diphosphate. In terms of biological role, catalyzes the addition and repair of the essential 3'-terminal CCA sequence in tRNAs without using a nucleic acid template. Adds these three nucleotides in the order of C, C, and A to the tRNA nucleotide-73, using CTP and ATP as substrates and producing inorganic pyrophosphate. tRNA 3'-terminal CCA addition is required both for tRNA processing and repair. Also involved in tRNA surveillance by mediating tandem CCA addition to generate a CCACCA at the 3' terminus of unstable tRNAs. While stable tRNAs receive only 3'-terminal CCA, unstable tRNAs are marked with CCACCA and rapidly degraded. The protein is CCA-adding enzyme of Buchnera aphidicola subsp. Schizaphis graminum (strain Sg).